The chain runs to 113 residues: Transcriptional regulator RamA (113 aa).

An HTH araC/xylS-type domain is found at 9-107 (DTIVEWIDDN…NLPPGAYRKE (99 aa)). 2 DNA-binding regions (H-T-H motif) span residues 26-47 (DDIA…MQYK) and 74-97 (VYDI…TRTF).

Functionally, transcriptional regulator. Binds to regulatory regions of target genes, including efflux pump operon acrAB and outer membrane protein gene tolC. Represses transcription of genes belonging to the flagellar regulon, including flhD, flhB and fliC; probably thereby leading to repression of motility. Represses expression of the flhDC operon in a post-transcriptional manner. Activates expression of acrAB, perhaps thereby conferring multidrug resistance. Involved in indole- and bile-mediated regulation of acrAB; binding of bile to RamA may contribute to activation of expression of acrAB. Plays a role in regulating virulence in mice. In Salmonella typhimurium (strain LT2 / SGSC1412 / ATCC 700720), this protein is Transcriptional regulator RamA.